We begin with the raw amino-acid sequence, 516 residues long: GMP synthase [glutamine-hydrolyzing] (516 aa).

A Glutamine amidotransferase type-1 domain is found at 10-201; sequence KIIVLDFGSQ…AFDVCGAVAN (192 aa). The active-site Nucleophile is the C87. Catalysis depends on residues H175 and E177. Positions 202–391 constitute a GMPS ATP-PPase domain; sequence WTMADFIDMQ…LGIPHDLVWR (190 aa). Residue 229–235 participates in ATP binding; it reads SGGVDSS.

In terms of assembly, homodimer.

The enzyme catalyses XMP + L-glutamine + ATP + H2O = GMP + L-glutamate + AMP + diphosphate + 2 H(+). The protein operates within purine metabolism; GMP biosynthesis; GMP from XMP (L-Gln route): step 1/1. In terms of biological role, catalyzes the synthesis of GMP from XMP. This Lactobacillus acidophilus (strain ATCC 700396 / NCK56 / N2 / NCFM) protein is GMP synthase [glutamine-hydrolyzing].